A 346-amino-acid chain; its full sequence is Probable WRKY transcription factor 54 (346 aa).

The tract at residues 109-130 is disordered; that stretch reads PVSCNGGDSGESKKKRLGVGKG. Residues 121-130 are compositionally biased toward basic residues; it reads KKKRLGVGKG. The segment at residues 146–214 is a DNA-binding region (WRKY); sequence VEAKSSEDRY…YIGYHTCTAN (69 aa). Over residues 267–282 the composition is skewed to basic and acidic residues; it reads VKEEQNNNGDQSKDYY. The interval 267–286 is disordered; it reads VKEEQNNNGDQSKDYYEGSS.

The protein belongs to the WRKY group III family. In terms of assembly, interacts with WRKY30. Binds to BZR2/BES1 to cooperatively regulate the expression of target genes. Interacts with ASK7/BIN2. Phosphorylated and destabilized by ASK7/BIN2. In terms of tissue distribution, expressed in leaves.

The protein localises to the nucleus. Transcription factor. Interacts specifically with the W box (5'-(T)TGAC[CT]-3'), a frequently occurring elicitor-responsive cis-acting element. Together with WRKY70, negative regulator of developmental senescence, probably via the regulation of several senescence-associated markers genes. Positive regulator of EDS1-dependent defense against E.amylovora. In collaboration with WRKY70, prevents stomatal closure and, consequently, osmotic stress tolerance. Together with WRKY46 and WRKY70, promotes brassinosteroid (BR)-regulated plant growth but prevent drought response by modulating gene expression. Negative regulator of SA biosynthesis. Prevents defense response to the necrotrophic pathogens P.carotovorum and B.cinerea, but promotes defense against biotrophic/hemibiotrophic pathogens P.syringae pv. tomato (Pst) DC3000, probably by regulating negatively the jasmonic acid (JA)/ethylene (ET) and positively the salicylic acid (SA) signaling pathways. The chain is Probable WRKY transcription factor 54 from Arabidopsis thaliana (Mouse-ear cress).